The primary structure comprises 644 residues: uncharacterized protein (644 aa).

The chain crosses the membrane as a helical span at residues 16-38; that stretch reads LLSYLGVVGVGIAGLCIYRSVWG. The span at 586 to 603 shows a compositional bias: basic and acidic residues; that stretch reads VRQLQKEAGEGEAEEHPR. Residues 586–613 form a disordered region; it reads VRQLQKEAGEGEAEEHPRARPAAGKAQR.

The protein resides in the membrane. This is an uncharacterized protein from Treponema pallidum (strain Nichols).